Consider the following 418-residue polypeptide: Coenzyme A biosynthesis bifunctional protein CoaBC (418 aa).

Positions 1 to 195 (MVDHKRIPKQ…ALPYDLAGRK (195 aa)) are phosphopantothenoylcysteine decarboxylase. Positions 196–418 (LLVTAGGTRE…IVTFLAGCSS (223 aa)) are phosphopantothenate--cysteine ligase. Residues Asp-285, Lys-295, Phe-336, Lys-354, and Lys-358 each contribute to the CTP site.

In the N-terminal section; belongs to the HFCD (homo-oligomeric flavin containing Cys decarboxylase) superfamily. The protein in the C-terminal section; belongs to the PPC synthetase family. It depends on Mg(2+) as a cofactor. FMN is required as a cofactor.

It carries out the reaction N-[(R)-4-phosphopantothenoyl]-L-cysteine + H(+) = (R)-4'-phosphopantetheine + CO2. The catalysed reaction is (R)-4'-phosphopantothenate + L-cysteine + CTP = N-[(R)-4-phosphopantothenoyl]-L-cysteine + CMP + diphosphate + H(+). It participates in cofactor biosynthesis; coenzyme A biosynthesis; CoA from (R)-pantothenate: step 2/5. It functions in the pathway cofactor biosynthesis; coenzyme A biosynthesis; CoA from (R)-pantothenate: step 3/5. Its function is as follows. Catalyzes two sequential steps in the biosynthesis of coenzyme A. In the first step cysteine is conjugated to 4'-phosphopantothenate to form 4-phosphopantothenoylcysteine. In the second step the latter compound is decarboxylated to form 4'-phosphopantotheine. In Mycobacterium bovis (strain ATCC BAA-935 / AF2122/97), this protein is Coenzyme A biosynthesis bifunctional protein CoaBC.